The following is a 1225-amino-acid chain: ATP-dependent helicase/nuclease subunit A (1225 aa).

Residues 11 to 478 (AQWTDAQWKS…IDLSKNFRSR (468 aa)) form the UvrD-like helicase ATP-binding domain. Position 32–39 (32–39 (AAAGSGKT)) interacts with ATP. Residues 479-790 (KEVLATTNYL…RMMTVHSSKG (312 aa)) form the UvrD-like helicase C-terminal domain. Basic and acidic residues predominate over residues 999–1014 (EKPSKQSVSELKRQLE). The tract at residues 999-1018 (EKPSKQSVSELKRQLETEES) is disordered.

The protein belongs to the helicase family. AddA subfamily. As to quaternary structure, heterodimer of AddA and AddB/RexB. It depends on Mg(2+) as a cofactor.

The catalysed reaction is Couples ATP hydrolysis with the unwinding of duplex DNA by translocating in the 3'-5' direction.. The enzyme catalyses ATP + H2O = ADP + phosphate + H(+). Functionally, the heterodimer acts as both an ATP-dependent DNA helicase and an ATP-dependent, dual-direction single-stranded exonuclease. Recognizes the chi site generating a DNA molecule suitable for the initiation of homologous recombination. The AddA nuclease domain is required for chi fragment generation; this subunit has the helicase and 3' -&gt; 5' nuclease activities. The protein is ATP-dependent helicase/nuclease subunit A of Staphylococcus haemolyticus (strain JCSC1435).